The sequence spans 1088 residues: RNA-directed RNA polymerase (1088 aa).

In terms of domain architecture, RdRp catalytic spans 501 to 687; the sequence is LSYGDVTRFL…AKRYIAGGKI (187 aa).

This sequence belongs to the reoviridae RNA-directed RNA polymerase family. In terms of assembly, interacts with VP3 (Potential). Interacts with VP2; this interaction activates VP1. Interacts with NSP5; this interaction is probably necessary for the formation of functional virus factories. Interacts with NSP2; this interaction is weak. The cofactor is Mg(2+).

The protein localises to the virion. The catalysed reaction is RNA(n) + a ribonucleoside 5'-triphosphate = RNA(n+1) + diphosphate. In terms of biological role, RNA-directed RNA polymerase that is involved in both transcription and genome replication. Together with VP3 capping enzyme, forms an enzyme complex positioned near the channels situated at each of the five-fold vertices of the core. Following infection, the outermost layer of the virus is lost, leaving a double-layered particle (DLP) made up of the core and VP6 shell. VP1 then catalyzes the transcription of fully conservative plus-strand genomic RNAs that are extruded through the DLP's channels into the cytoplasm where they function as mRNAs for translation of viral proteins. One copy of each of the viral (+)RNAs is also recruited during core assembly, together with newly synthesized polymerase complexes and VP2. The polymerase of these novo-formed particles catalyzes the synthesis of complementary minus-strands leading to dsRNA formation. To do so, the polymerase specifically recognizes and binds 4 bases 5'-UGUG-3' in the conserved 3'-sequence of plus-strand RNA templates. VP2 presumably activates the autoinhibited VP1-RNA complex to coordinate packaging and genome replication. Once dsRNA synthesis is complete, the polymerase switches to the transcriptional mode, thus providing secondary transcription. The protein is RNA-directed RNA polymerase of Homo sapiens (Human).